The sequence spans 157 residues: 2-C-methyl-D-erythritol 2,4-cyclodiphosphate synthase (157 aa).

Positions 8 and 10 each coordinate a divalent metal cation. 4-CDP-2-C-methyl-D-erythritol 2-phosphate contacts are provided by residues 8–10 and 34–35; these read DVH and HS. His-42 is an a divalent metal cation binding site. Residues 56–58, 61–65, 100–106, 132–135, Phe-139, and Arg-142 contribute to the 4-CDP-2-C-methyl-D-erythritol 2-phosphate site; these read DIG, FPDTD, AQAPKML, and TTTE.

Belongs to the IspF family. In terms of assembly, homotrimer. It depends on a divalent metal cation as a cofactor.

It carries out the reaction 4-CDP-2-C-methyl-D-erythritol 2-phosphate = 2-C-methyl-D-erythritol 2,4-cyclic diphosphate + CMP. The protein operates within isoprenoid biosynthesis; isopentenyl diphosphate biosynthesis via DXP pathway; isopentenyl diphosphate from 1-deoxy-D-xylulose 5-phosphate: step 4/6. Functionally, involved in the biosynthesis of isopentenyl diphosphate (IPP) and dimethylallyl diphosphate (DMAPP), two major building blocks of isoprenoid compounds. Catalyzes the conversion of 4-diphosphocytidyl-2-C-methyl-D-erythritol 2-phosphate (CDP-ME2P) to 2-C-methyl-D-erythritol 2,4-cyclodiphosphate (ME-CPP) with a corresponding release of cytidine 5-monophosphate (CMP). This chain is 2-C-methyl-D-erythritol 2,4-cyclodiphosphate synthase, found in Photorhabdus laumondii subsp. laumondii (strain DSM 15139 / CIP 105565 / TT01) (Photorhabdus luminescens subsp. laumondii).